A 357-amino-acid polypeptide reads, in one-letter code: Vomeronasal type-1 receptor 5 (357 aa).

At 1–3 (MLK) the chain is on the extracellular side. Residues 4–24 (LVIIENMAEIMLFSLDLLLFS) traverse the membrane as a helical segment. At 25 to 52 (TDILCFNFPSKMIKLPGFITIQIFFYPQ) the chain is on the cytoplasmic side. Residues 53–73 (ASFGISANTILLLFHIFTFVF) traverse the membrane as a helical segment. Over 74-81 (SHRSKSID) the chain is Extracellular. A helical transmembrane segment spans residues 82–102 (MIISHLSLIHILLLFTQAILV). Residues 103 to 130 (SLDFFGSQNTQDDLRYKVIVFLNKVMRG) are Cytoplasmic-facing. Residues 131–151 (LSICTPCLLSVLQAIISPSIF) form a helical membrane-spanning segment. Topologically, residues 152–163 (SLAKLKHPSASH) are extracellular. A helical transmembrane segment spans residues 164–184 (ILGFFLFSWVLNMFIGVIFCC). Residues 185-269 (TLRLPPVKRG…RVSPVKRASQ (85 aa)) are Cytoplasmic-facing. The helical transmembrane segment at 270–290 (AILLLVSFVFTYWVDFTFSFS) threads the bilayer. The Extracellular portion of the chain corresponds to 291–300 (GGVTWINDSL). An N-linked (GlcNAc...) asparagine glycan is attached at asparagine 297. Residues 301–321 (LVWLQVIVANSYAAISPLMLI) form a helical membrane-spanning segment. The Cytoplasmic segment spans residues 322–357 (YADNQIFKTLQMLWFKYLSPPKLMLKFNRQCGSTKK).

This sequence belongs to the G-protein coupled receptor 1 family.

The protein localises to the cell membrane. Functionally, putative pheromone receptor. The chain is Vomeronasal type-1 receptor 5 (VN1R5) from Homo sapiens (Human).